The chain runs to 199 residues: dTTP/UTP pyrophosphatase (199 aa).

D76 functions as the Proton acceptor in the catalytic mechanism.

It belongs to the Maf family. YhdE subfamily. It depends on a divalent metal cation as a cofactor.

It localises to the cytoplasm. The enzyme catalyses dTTP + H2O = dTMP + diphosphate + H(+). It catalyses the reaction UTP + H2O = UMP + diphosphate + H(+). Nucleoside triphosphate pyrophosphatase that hydrolyzes dTTP and UTP. May have a dual role in cell division arrest and in preventing the incorporation of modified nucleotides into cellular nucleic acids. The sequence is that of dTTP/UTP pyrophosphatase from Chlorobaculum parvum (strain DSM 263 / NCIMB 8327) (Chlorobium vibrioforme subsp. thiosulfatophilum).